The chain runs to 722 residues: MAVDGTLVYIRVTLLLLWLGVFLSISGYCQAGPSQHFTSPEVVIPLKVISRGRSAKAPGWLSYSLRFGGQKHVVHMRVKKLLVSRHLPVFTYTDDRALLEDQLFIPDDCYYHGYVEAAPESLVVFSACFGGFRGVLKISGLTYEIEPIRHSATFEHLVYKINSNETQFPAMRCGLTEKEVARQQLEFEEAENSALEPKSAGDWWTHAWFLELVVVVNHDFFIYSQSNISKVQEDVFLVVNIVDSMYKQLGTYIILIGIEIWNQGNVFPMTSIEQVLNDFSQWKQISLSQLQHDAAHMFIKNSLISILGLAYVAGICRPPIDCGVDNFQGDTWSLFANTVAHELGHTLGMQHDEEFCFCGERGCIMNTFRVPAEKFTNCSYADFMKTTLNQGSCLHNPPRLGEIFMLKRCGNGVVEREEQCDCGSVQQCEQDACCLLNCTLRPGAACAFGLCCKDCKFMPSGELCRQEVNECDLPEWCNGTSHQCPEDRYVQDGIPCSDSAYCYQKRCNNHDQHCREIFGKDAKSASQNCYKEINSQGNRFGHCGINGTTYLKCHISDVFCGRVQCENVRDIPLLQDHFTLQHTHINGVTCWGIDYHLRMNISDIGEVKDGTVCGPGKICIHKKCVSLSVLSHVCLPETCNMKGICNNKHHCHCGYGWSPPYCQHRGYGGSIDSGPASAKRGVFLPLIVIPSLSVLTFLFTVGLLMYLRQCSGPKETKAHSSG.

The N-terminal stretch at 1–31 is a signal peptide; sequence MAVDGTLVYIRVTLLLLWLGVFLSISGYCQA. Residues 32–196 constitute a propeptide that is removed on maturation; that stretch reads GPSQHFTSPE…FEEAENSALE (165 aa). N-linked (GlcNAc...) asparagine glycosylation occurs at N164. The Cysteine switch motif lies at 171-178; it reads MRCGLTEK. C173 is a binding site for Zn(2+). The Extracellular portion of the chain corresponds to 197-681; it reads PKSAGDWWTH…DSGPASAKRG (485 aa). The 191-residue stretch at 208-398 folds into the Peptidase M12B domain; it reads WFLELVVVVN…NQGSCLHNPP (191 aa). N227 carries an N-linked (GlcNAc...) asparagine glycan. 3 cysteine pairs are disulfide-bonded: C316–C393, C356–C378, and C358–C363. H341 serves as a coordination point for Zn(2+). Residue E342 is part of the active site. Residues H345 and H351 each contribute to the Zn(2+) site. N-linked (GlcNAc...) asparagine glycans are attached at residues N377, N437, N478, N546, and N600. The Disintegrin domain maps to 406–492; it reads LKRCGNGVVE…QCPEDRYVQD (87 aa). Residues C464 and C484 are joined by a disulfide bond. 3 disulfides stabilise this stretch: C634/C645, C639/C651, and C653/C662. Residues 634–663 form the EGF-like domain; the sequence is CLPETCNMKGICNNKHHCHCGYGWSPPYCQ. A helical membrane pass occupies residues 682–702; the sequence is VFLPLIVIPSLSVLTFLFTVG. Topologically, residues 703–722 are cytoplasmic; sequence LLMYLRQCSGPKETKAHSSG.

Zn(2+) is required as a cofactor. Has no obvious cleavage site for furin endopeptidase, suggesting that the proteolytic processing is regulated.

It localises to the membrane. Functionally, may be involved in sperm maturation and/or fertilization. May also be involved in epithelia functions associated with establishing and maintaining gradients of ions or nutrients. The sequence is that of Disintegrin and metalloproteinase domain-containing protein 21 (ADAM21) from Homo sapiens (Human).